The primary structure comprises 91 residues: Probable Fe(2+)-trafficking protein (91 aa).

It belongs to the Fe(2+)-trafficking protein family.

Functionally, could be a mediator in iron transactions between iron acquisition and iron-requiring processes, such as synthesis and/or repair of Fe-S clusters in biosynthetic enzymes. The chain is Probable Fe(2+)-trafficking protein from Ralstonia pickettii (strain 12J).